The chain runs to 325 residues: Proto-oncogene Mas (325 aa).

Residues 1-36 (MDGSNVTSFVVEEPTNISTGRNASVGNAHRQIPIVH) are Extracellular-facing. Asn5, Asn16, and Asn22 each carry an N-linked (GlcNAc...) asparagine glycan. The helical transmembrane segment at 37–61 (WVIMSISPVGFVENGILLWFLCFRM) threads the bilayer. The Cytoplasmic portion of the chain corresponds to 62-65 (RRNP). Residues 66 to 86 (FTVYITHLSIADISLLFCIFI) form a helical membrane-spanning segment. The Extracellular portion of the chain corresponds to 87-104 (LSIDYALDYELSSGHYYT). The helical transmembrane segment at 105-128 (IVTLSVTFLFGYNTGLYLLTAISV) threads the bilayer. Topologically, residues 129–149 (ERCLSVLYPIWYRCHRPKYQS) are cytoplasmic. The chain crosses the membrane as a helical span at residues 150 to 172 (ALVCALLWALSCLVTTMEYVMCI). The Extracellular segment spans residues 173–185 (DREEESHSRNDCR). Residues 186–206 (AVIIFIAILSFLVFTPLMLVS) form a helical membrane-spanning segment. Residues 207–224 (STILVVKIRKNTWASHSS) are Cytoplasmic-facing. The chain crosses the membrane as a helical span at residues 225-245 (KLYIVIMVTIIIFLIFAMPMR). The Extracellular segment spans residues 246–263 (LLYLLYYEYWSTFGNLHH). The chain crosses the membrane as a helical span at residues 264–284 (ISLLFSTINSSANPFIYFFVG). Over 285-325 (SSKKKRFKESLKVVLTRAFKDEMQPRRQKDNCNTVTVETVV) the chain is Cytoplasmic.

It belongs to the G-protein coupled receptor 1 family. In terms of assembly, interacts with AGTR1. Interacts with FLNA (via filamin repeat 21); increases PKA-mediated phosphorylation of FLNA.

It is found in the cell membrane. In terms of biological role, receptor for angiotensin 1-7. Acts specifically as a functional antagonist of AGTR1 (angiotensin-2 type 1 receptor), although it up-regulates AGTR1 receptor levels. Positive regulation of AGTR1 levels occurs through activation of the G-proteins GNA11 and GNAQ, and stimulation of the protein kinase C signaling cascade. The antagonist effect on AGTR1 function is probably due to AGTR1 being physically altered by MAS1. The sequence is that of Proto-oncogene Mas (MAS1) from Homo sapiens (Human).